Here is a 473-residue protein sequence, read N- to C-terminus: Photosystem II CP43 reaction center protein (473 aa).

A propeptide spanning residues 1–14 (MKNLYSLRRFYHVE) is cleaved from the precursor. Position 15 is an N-acetylthreonine (threonine 15). Threonine 15 is modified (phosphothreonine). 5 helical membrane-spanning segments follow: residues 69–93 (LFEV…PHLA), 134–155 (LVGP…KDKN), 178–200 (KAMY…RIIS), 255–275 (KPWA…LSYS), and 291–312 (WFNT…ASQS). Position 367 (glutamate 367) interacts with [CaMn4O5] cluster. Residues 447 to 471 (RARAAAAGFEKGIDRDNEPVLSMRP) traverse the membrane as a helical segment.

The protein belongs to the PsbB/PsbC family. PsbC subfamily. In terms of assembly, PSII is composed of 1 copy each of membrane proteins PsbA, PsbB, PsbC, PsbD, PsbE, PsbF, PsbH, PsbI, PsbJ, PsbK, PsbL, PsbM, PsbT, PsbX, PsbY, PsbZ, Psb30/Ycf12, at least 3 peripheral proteins of the oxygen-evolving complex and a large number of cofactors. It forms dimeric complexes. The cofactor is Binds multiple chlorophylls and provides some of the ligands for the Ca-4Mn-5O cluster of the oxygen-evolving complex. It may also provide a ligand for a Cl- that is required for oxygen evolution. PSII binds additional chlorophylls, carotenoids and specific lipids..

It is found in the plastid. The protein localises to the chloroplast thylakoid membrane. In terms of biological role, one of the components of the core complex of photosystem II (PSII). It binds chlorophyll and helps catalyze the primary light-induced photochemical processes of PSII. PSII is a light-driven water:plastoquinone oxidoreductase, using light energy to abstract electrons from H(2)O, generating O(2) and a proton gradient subsequently used for ATP formation. This chain is Photosystem II CP43 reaction center protein, found in Chlorella vulgaris (Green alga).